The primary structure comprises 651 residues: Gag-Pro polyprotein (651 aa).

The N-myristoyl glycine; by host moiety is linked to residue Gly-2. The segment at 93 to 144 (QIPSRPAPPPPSSPTHDPPDSDPQIPPPYVEPTAPQVLPVMHPHGAPPNHRP) is disordered. At Ser-105 the chain carries Phosphoserine; by host MAPK1. Positions 118–121 (PPPY) match the PPXY motif motif. Positions 124–127 (PTAP) match the PTAP/PSAP motif motif. CCHC-type zinc fingers lie at residues 355–372 (QPCFRCGKAGHWSRDCTQ) and 378–395 (GPCPLCQDPTHWKRDCPR). Residues 476–554 (IEALLDTGAD…NNWAIIGRDA (79 aa)) enclose the Peptidase A2 domain. Asp-481 serves as the catalytic For protease activity; shared with dimeric partner.

As to quaternary structure, homodimer; the homodimers are part of the immature particles. Interacts with human TSG101 and NEDD4; these interactions are essential for budding and release of viral particles. Homodimer; further assembles as homohexamers. Post-translationally, specific enzymatic cleavages by the viral protease yield mature proteins. The polyprotein is cleaved during and after budding, this process is termed maturation. The protease is autoproteolytically processed at its N- and C-termini. Phosphorylation of the matrix protein p19 by MAPK1 seems to play a role in budding. In terms of processing, myristoylated. Myristoylation of the matrix (MA) domain mediates the transport and binding of Gag polyproteins to the host plasma membrane and is required for the assembly of viral particles.

The protein resides in the virion. Its function is as follows. The matrix domain targets Gag, Gag-Pro and Gag-Pro-Pol polyproteins to the plasma membrane via a multipartite membrane binding signal, that includes its myristoylated N-terminus. Matrix protein. In terms of biological role, forms the spherical core of the virus that encapsulates the genomic RNA-nucleocapsid complex. Functionally, binds strongly to viral nucleic acids and promote their aggregation. Also destabilizes the nucleic acids duplexes via highly structured zinc-binding motifs. Its function is as follows. The aspartyl protease mediates proteolytic cleavages of Gag and Gag-Pol polyproteins during or shortly after the release of the virion from the plasma membrane. Cleavages take place as an ordered, step-wise cascade to yield mature proteins. This process is called maturation. Displays maximal activity during the budding process just prior to particle release from the cell. Cleaves the translation initiation factor eIF4G leading to the inhibition of host cap-dependent translation. This chain is Gag-Pro polyprotein (gag-pro), found in Human T-cell leukemia virus 1 (strain Japan ATK-1 subtype A) (HTLV-1).